Here is a 349-residue protein sequence, read N- to C-terminus: UDP-N-acetylenolpyruvoylglucosamine reductase (349 aa).

Residues 26–197 enclose the FAD-binding PCMH-type domain; the sequence is FDARARVAAR…VAVTFRLPKA (172 aa). The active site involves Arg-173. The active-site Proton donor is the Ser-249. Glu-345 is a catalytic residue.

This sequence belongs to the MurB family. FAD serves as cofactor.

It localises to the cytoplasm. It catalyses the reaction UDP-N-acetyl-alpha-D-muramate + NADP(+) = UDP-N-acetyl-3-O-(1-carboxyvinyl)-alpha-D-glucosamine + NADPH + H(+). It participates in cell wall biogenesis; peptidoglycan biosynthesis. Cell wall formation. The polypeptide is UDP-N-acetylenolpyruvoylglucosamine reductase (Burkholderia pseudomallei (strain 1710b)).